A 404-amino-acid chain; its full sequence is Serine/threonine transporter SstT (404 aa).

9 helical membrane-spanning segments follow: residues 17-37, 39-59, 75-95, 138-158, 179-199, 212-232, 287-307, 319-339, and 354-374; these read IGIG…VTAI, ILGQ…VFAL, MTLI…VAVI, ALAT…GLAL, IVVW…FSTV, LLIL…NPLL, IPLG…VLTL, FLTA…ASGV, and FGIS…VGVI.

Belongs to the dicarboxylate/amino acid:cation symporter (DAACS) (TC 2.A.23) family.

It is found in the cell membrane. The enzyme catalyses L-serine(in) + Na(+)(in) = L-serine(out) + Na(+)(out). The catalysed reaction is L-threonine(in) + Na(+)(in) = L-threonine(out) + Na(+)(out). Its function is as follows. Involved in the import of serine and threonine into the cell, with the concomitant import of sodium (symport system). The sequence is that of Serine/threonine transporter SstT from Streptococcus equi subsp. equi (strain 4047).